A 74-amino-acid chain; its full sequence is Acyl carrier protein (74 aa).

The region spanning 1-73 (MAVFEKVQEI…DLVAYVEEKS (73 aa)) is the Carrier domain. Residue Ser-35 is modified to O-(pantetheine 4'-phosphoryl)serine.

The protein belongs to the acyl carrier protein (ACP) family. Post-translationally, 4'-phosphopantetheine is transferred from CoA to a specific serine of apo-ACP by AcpS. This modification is essential for activity because fatty acids are bound in thioester linkage to the sulfhydryl of the prosthetic group.

The protein localises to the cytoplasm. The protein operates within lipid metabolism; fatty acid biosynthesis. Its function is as follows. Carrier of the growing fatty acid chain in fatty acid biosynthesis. The sequence is that of Acyl carrier protein from Streptococcus pyogenes serotype M1.